A 393-amino-acid polypeptide reads, in one-letter code: Putative N(4)-(beta-N-acetylglucosaminyl)-L-asparaginase GH22932 (393 aa).

Residues 15 to 41 (ALKPITNSSSDTITPNPNLITTSRGSS) form a disordered region. Over residues 19–41 (ITNSSSDTITPNPNLITTSRGSS) the composition is skewed to polar residues. Intrachain disulfides connect Cys-100–Cys-105 and Cys-199–Cys-215. Thr-246 functions as the Nucleophile in the catalytic mechanism. Residues 274-277 (RVGD) and 297-300 (TGDG) contribute to the substrate site. Cys-357 and Cys-381 are oxidised to a cystine.

This sequence belongs to the Ntn-hydrolase family. Heterotetramer of two alpha and two beta chains arranged as a dimer of alpha/beta heterodimers. Post-translationally, cleaved into an alpha and beta chain by autocatalysis; this activates the enzyme. The N-terminal residue of the beta subunit is responsible for the nucleophile hydrolase activity.

It carries out the reaction N(4)-(beta-N-acetyl-D-glucosaminyl)-L-asparagine + H2O = N-acetyl-beta-D-glucosaminylamine + L-aspartate + H(+). Its function is as follows. Cleaves the GlcNAc-Asn bond which joins oligosaccharides to the peptide of asparagine-linked glycoproteins. The chain is Putative N(4)-(beta-N-acetylglucosaminyl)-L-asparaginase GH22932 from Drosophila grimshawi (Hawaiian fruit fly).